Here is a 379-residue protein sequence, read N- to C-terminus: MTNIRKNHPLLKIANNSLIDLPTPPNISSLWNFGSLLGACLIIQVITGLFLAMHYTADTTTAFSSVTHICRDVSYGWMIRYLHANGASMFFLCLFIHVGRGLYYGSFTLLETWNVGIILLFSVMATAFMGYVLPWGQMSFWGATVITNLLSAIPYIGTDLVEWIWGGFSVSKATLTRFFALHFILPFIISAWVMIHLLFLHETGSNNPLGMSSNSDKIPFHPYYTTKDFLGLLLLILLLMTLALFYPDLLGDPDNYTPANPLNTPSHIKPEWYFLFAYAILRSIPNKLGGVVALILSILILMIIPFLQPNKQQTMMFRPLSQFLFWILVADLLTLTWIGGQPVEDPFISIGQTASMLYFSLMIFIMPMTCLIENKMLKW.

4 helical membrane passes run 33-53 (FGSLLGACLIIQVITGLFLAM), 77-98 (WMIRYLHANGASMFFLCLFIHV), 113-133 (WNVGIILLFSVMATAFMGYVL), and 178-198 (FFALHFILPFIISAWVMIHLL). Residues H83 and H97 each coordinate heme b. Positions 182 and 196 each coordinate heme b. H201 lines the a ubiquinone pocket. Transmembrane regions (helical) follow at residues 226-246 (TKDFLGLLLLILLLMTLALFY), 288-308 (LGGVVALILSILILMIIPFLQ), 320-340 (LSQFLFWILVADLLTLTWIGG), and 347-367 (FISIGQTASMLYFSLMIFIMP).

This sequence belongs to the cytochrome b family. In terms of assembly, the cytochrome bc1 complex contains 11 subunits: 3 respiratory subunits (MT-CYB, CYC1 and UQCRFS1), 2 core proteins (UQCRC1 and UQCRC2) and 6 low-molecular weight proteins (UQCRH/QCR6, UQCRB/QCR7, UQCRQ/QCR8, UQCR10/QCR9, UQCR11/QCR10 and a cleavage product of UQCRFS1). This cytochrome bc1 complex then forms a dimer. Requires heme b as cofactor.

It is found in the mitochondrion inner membrane. Functionally, component of the ubiquinol-cytochrome c reductase complex (complex III or cytochrome b-c1 complex) that is part of the mitochondrial respiratory chain. The b-c1 complex mediates electron transfer from ubiquinol to cytochrome c. Contributes to the generation of a proton gradient across the mitochondrial membrane that is then used for ATP synthesis. The chain is Cytochrome b (MT-CYB) from Lepilemur septentrionalis (Northern sportive lemur).